A 430-amino-acid chain; its full sequence is 2-deoxy-scyllo-inosose synthase (430 aa).

Residues D42, 73 to 76, 105 to 109, 129 to 130, 140 to 142, and 151 to 152 contribute to the NAD(+) site; these read EVHK, GVTGN, TT, SLK, and KN. K142 is an active-site residue. E184 is a binding site for Co(2+). E244 is an active-site residue. Residues H247 and H263 each contribute to the Co(2+) site. A disordered region spans residues 371 to 430; the sequence is RGGAGGGAAEPAAARTGPVPDGPEAAVPATPGPVPAGPAAAAPLPSGPAPTAPAAAGPVP. Positions 379-399 are enriched in low complexity; the sequence is AEPAAARTGPVPDGPEAAVPA.

The protein belongs to the sugar phosphate cyclases superfamily. DOI synthase family. NAD(+) serves as cofactor. The cofactor is Co(2+).

It carries out the reaction D-glucose 6-phosphate = 2-deoxy-L-scyllo-inosose + phosphate. It functions in the pathway metabolic intermediate biosynthesis; 2-deoxystreptamine biosynthesis; 2-deoxystreptamine from D-glucose 6-phosphate: step 1/4. Its pathway is antibiotic biosynthesis; neomycin biosynthesis. Its function is as follows. Catalyzes the intramolecular carbocycle formation from D-glucose-6-phosphate to 2-deoxy-scyllo-inosose (DOI). This Streptomyces fradiae (Streptomyces roseoflavus) protein is 2-deoxy-scyllo-inosose synthase (neoC).